Consider the following 273-residue polypeptide: Ribosomal RNA small subunit methyltransferase A (273 aa).

Positions 23, 25, 50, 72, 97, and 116 each coordinate S-adenosyl-L-methionine.

It belongs to the class I-like SAM-binding methyltransferase superfamily. rRNA adenine N(6)-methyltransferase family. RsmA subfamily.

It is found in the cytoplasm. The catalysed reaction is adenosine(1518)/adenosine(1519) in 16S rRNA + 4 S-adenosyl-L-methionine = N(6)-dimethyladenosine(1518)/N(6)-dimethyladenosine(1519) in 16S rRNA + 4 S-adenosyl-L-homocysteine + 4 H(+). Specifically dimethylates two adjacent adenosines (A1518 and A1519) in the loop of a conserved hairpin near the 3'-end of 16S rRNA in the 30S particle. May play a critical role in biogenesis of 30S subunits. The polypeptide is Ribosomal RNA small subunit methyltransferase A (Rickettsia akari (strain Hartford)).